The sequence spans 198 residues: Na(+)-translocating NADH-quinone reductase subunit E (198 aa).

6 helical membrane passes run Ala-11–Val-31, Val-35–Ala-55, Phe-77–Ile-97, Leu-109–Met-129, Ile-140–Ile-160, and Leu-176–Val-196.

It belongs to the NqrDE/RnfAE family. As to quaternary structure, composed of six subunits; NqrA, NqrB, NqrC, NqrD, NqrE and NqrF.

It localises to the cell inner membrane. It catalyses the reaction a ubiquinone + n Na(+)(in) + NADH + H(+) = a ubiquinol + n Na(+)(out) + NAD(+). Functionally, NQR complex catalyzes the reduction of ubiquinone-1 to ubiquinol by two successive reactions, coupled with the transport of Na(+) ions from the cytoplasm to the periplasm. NqrA to NqrE are probably involved in the second step, the conversion of ubisemiquinone to ubiquinol. This Yersinia enterocolitica serotype O:8 / biotype 1B (strain NCTC 13174 / 8081) protein is Na(+)-translocating NADH-quinone reductase subunit E.